The sequence spans 104 residues: Large ribosomal subunit protein bL21 (104 aa).

Belongs to the bacterial ribosomal protein bL21 family. In terms of assembly, part of the 50S ribosomal subunit. Contacts protein L20.

In terms of biological role, this protein binds to 23S rRNA in the presence of protein L20. This chain is Large ribosomal subunit protein bL21, found in Streptococcus thermophilus (strain ATCC BAA-491 / LMD-9).